Reading from the N-terminus, the 430-residue chain is ATP-dependent RNA helicase RhlB (430 aa).

The Q motif motif lies at Gln9–Ala37. Positions Leu40 to Val219 constitute a Helicase ATP-binding domain. Ala53 to Thr60 lines the ATP pocket. Positions Asp165 to Asp168 match the DEAD box motif. Residues Arg245 to Met390 enclose the Helicase C-terminal domain. A disordered region spans residues Asp392–Asp430.

It belongs to the DEAD box helicase family. RhlB subfamily. Component of the RNA degradosome, which is a multiprotein complex involved in RNA processing and mRNA degradation.

The protein localises to the cytoplasm. The enzyme catalyses ATP + H2O = ADP + phosphate + H(+). Functionally, DEAD-box RNA helicase involved in RNA degradation. Has RNA-dependent ATPase activity and unwinds double-stranded RNA. The sequence is that of ATP-dependent RNA helicase RhlB from Pectobacterium atrosepticum (strain SCRI 1043 / ATCC BAA-672) (Erwinia carotovora subsp. atroseptica).